The following is a 198-amino-acid chain: Na(+)-translocating NADH-quinone reductase subunit E (198 aa).

6 helical membrane-spanning segments follow: residues Ala11 to Val31, Val35 to Val55, Phe77 to Val97, Gly110 to Val130, Ile140 to Leu160, and Leu176 to Ile196.

It belongs to the NqrDE/RnfAE family. Composed of six subunits; NqrA, NqrB, NqrC, NqrD, NqrE and NqrF.

The protein resides in the cell inner membrane. It catalyses the reaction a ubiquinone + n Na(+)(in) + NADH + H(+) = a ubiquinol + n Na(+)(out) + NAD(+). In terms of biological role, NQR complex catalyzes the reduction of ubiquinone-1 to ubiquinol by two successive reactions, coupled with the transport of Na(+) ions from the cytoplasm to the periplasm. NqrA to NqrE are probably involved in the second step, the conversion of ubisemiquinone to ubiquinol. This chain is Na(+)-translocating NADH-quinone reductase subunit E, found in Haemophilus influenzae (strain 86-028NP).